The primary structure comprises 71 residues: DNA-directed RNA polymerase subunit epsilon (71 aa).

The protein belongs to the RNA polymerase subunit epsilon family. As to quaternary structure, RNAP is composed of a core of 2 alpha, a beta and a beta' subunit. The core is associated with a delta subunit, and at least one of epsilon or omega. When a sigma factor is associated with the core the holoenzyme is formed, which can initiate transcription.

It carries out the reaction RNA(n) + a ribonucleoside 5'-triphosphate = RNA(n+1) + diphosphate. In terms of biological role, a non-essential component of RNA polymerase (RNAP). The protein is DNA-directed RNA polymerase subunit epsilon of Anoxybacillus flavithermus (strain DSM 21510 / WK1).